The sequence spans 369 residues: UDP-N-acetylglucosamine--N-acetylmuramyl-(pentapeptide) pyrophosphoryl-undecaprenol N-acetylglucosamine transferase (369 aa).

Residues 10 to 12 (TGG), Asn-124, Arg-166, Ser-196, and Gln-300 contribute to the UDP-N-acetyl-alpha-D-glucosamine site.

The protein belongs to the glycosyltransferase 28 family. MurG subfamily.

Its subcellular location is the cell membrane. The catalysed reaction is di-trans,octa-cis-undecaprenyl diphospho-N-acetyl-alpha-D-muramoyl-L-alanyl-D-glutamyl-meso-2,6-diaminopimeloyl-D-alanyl-D-alanine + UDP-N-acetyl-alpha-D-glucosamine = di-trans,octa-cis-undecaprenyl diphospho-[N-acetyl-alpha-D-glucosaminyl-(1-&gt;4)]-N-acetyl-alpha-D-muramoyl-L-alanyl-D-glutamyl-meso-2,6-diaminopimeloyl-D-alanyl-D-alanine + UDP + H(+). It participates in cell wall biogenesis; peptidoglycan biosynthesis. Cell wall formation. Catalyzes the transfer of a GlcNAc subunit on undecaprenyl-pyrophosphoryl-MurNAc-pentapeptide (lipid intermediate I) to form undecaprenyl-pyrophosphoryl-MurNAc-(pentapeptide)GlcNAc (lipid intermediate II). This chain is UDP-N-acetylglucosamine--N-acetylmuramyl-(pentapeptide) pyrophosphoryl-undecaprenol N-acetylglucosamine transferase, found in Desulfitobacterium hafniense (strain Y51).